The primary structure comprises 630 residues: Phosphatidylinositol 4-kinase gamma 5 (630 aa).

The Ubiquitin-like; degenerate domain maps to 41–98 (RRVFVQTETGCVLGLELDRSDNAHTVKRKLQVALNFPIEESSLTFGDLVLKNDLTAVR). One can recognise a PI3K/PI4K catalytic domain in the interval 162-459 (GIDPVAVNSG…LIGEKDAESP (298 aa)). The segment at 168 to 174 (VNSGLGG) is G-loop. Residues 169 to 175 (NSGLGGA), K190, and 279 to 282 (QQFI) contribute to the ATP site. Residues 312 to 320 (LNTDRHSGN) form a catalytic loop region. Residues 339–365 (PIDHGLCLPETLEDPYFEWIHWPQASI) form an activation loop region. Residue D341 participates in ATP binding. Positions 500 to 527 (LSKVEETTEDGEEEEEEDREEEENDRAD) are disordered. Positions 506 to 524 (TTEDGEEEEEEDREEEEND) are enriched in acidic residues. S571 carries the post-translational modification Phosphoserine.

The protein belongs to the PI3/PI4-kinase family. Type II PI4K subfamily. As to quaternary structure, interacts with AHK2.

The enzyme catalyses a 1,2-diacyl-sn-glycero-3-phospho-(1D-myo-inositol) + ATP = a 1,2-diacyl-sn-glycero-3-phospho-(1D-myo-inositol 4-phosphate) + ADP + H(+). Functionally, the phosphorylation of phosphatidylinositol (PI) to PI4P is the first committed step in the generation of phosphatidylinositol 4,5-bisphosphate (PIP2), a precursor of the second messenger inositol 1,4,5-trisphosphate (InsP3). This Arabidopsis thaliana (Mouse-ear cress) protein is Phosphatidylinositol 4-kinase gamma 5 (PI4KG5).